Here is a 136-residue protein sequence, read N- to C-terminus: Large ribosomal subunit protein eL27 (136 aa).

A KOW domain is found at 5-40; it reads MKPGKVVMVLAGRYAGRKAVIVKNIDDGTADRPYSH.

This sequence belongs to the eukaryotic ribosomal protein eL27 family. As to quaternary structure, component of the large ribosomal subunit.

It localises to the cytoplasm. The protein localises to the cytosol. The protein resides in the rough endoplasmic reticulum. Component of the large ribosomal subunit. The polypeptide is Large ribosomal subunit protein eL27 (rpl27) (Danio rerio (Zebrafish)).